A 267-amino-acid chain; its full sequence is Undecaprenyl-diphosphatase (267 aa).

A run of 8 helical transmembrane segments spans residues 1–21, 39–59, 83–103, 111–131, 144–164, 189–209, 218–238, and 246–266; these read MSYF…FLPI, QGLA…VIYF, AKLA…GLLM, LRSA…LWWV, TGWK…IPGT, FLMS…KLVT, FLLT…HFFL, and MTPF…FLLM.

It belongs to the UppP family.

It localises to the cell inner membrane. It carries out the reaction di-trans,octa-cis-undecaprenyl diphosphate + H2O = di-trans,octa-cis-undecaprenyl phosphate + phosphate + H(+). Functionally, catalyzes the dephosphorylation of undecaprenyl diphosphate (UPP). Confers resistance to bacitracin. The protein is Undecaprenyl-diphosphatase of Vibrio campbellii (strain ATCC BAA-1116).